Consider the following 416-residue polypeptide: Enterobactin exporter EntS (416 aa).

Topologically, residues 1 to 21 (MNKQSWLLNLSLLKTHPAFRA) are cytoplasmic. A helical transmembrane segment spans residues 22 to 42 (VFLARFISIVSLGLLGVAVPV). Over 43 to 55 (QIQMMTHSTWQVG) the chain is Periplasmic. A helical membrane pass occupies residues 56 to 76 (LSVTLTGGAMFVGLMVGGVLA). Residues 77–83 (DRYERKK) lie on the Cytoplasmic side of the membrane. The helical transmembrane segment at 84–104 (VILLARGTCGIGFIGLCLNAL) threads the bilayer. At 105–109 (LPEPS) the chain is on the periplasmic side. Residues 110–130 (LLAIYLLGLWDGFFASLGVTA) form a helical membrane-spanning segment. The Cytoplasmic portion of the chain corresponds to 131–156 (LLAATPALVGRENLMQAGAITMLTVR). A helical transmembrane segment spans residues 157–177 (LGSVISPMIGGLLLATGGVAW). A topological domain (periplasmic) is located at residue asparagine 178. A helical transmembrane segment spans residues 179–199 (YGLAAAGTFITLLPLLSLPAL). The Cytoplasmic segment spans residues 200–218 (PPPPQPREHPLKSLLAGFR). The helical transmembrane segment at 219 to 239 (FLLASPLVGGIALLGGLLTMA) threads the bilayer. The Periplasmic segment spans residues 240 to 256 (SAVRVLYPALADNWQMS). A helical transmembrane segment spans residues 257–277 (AAQIGFLYAAIPLGAAIGALT). The Cytoplasmic segment spans residues 278-287 (SGKLAHSARP). A helical transmembrane segment spans residues 288–307 (GLLMLLSTLGSFLAIGLFGL). Topologically, residues 308–313 (MPMWIL) are periplasmic. Residues 314-336 (GVVCLALFGWLSAVSSLLQYTML) form a helical membrane-spanning segment. Over 337 to 356 (QTQTPEAMLGRINGLWTAQN) the chain is Cytoplasmic. The chain crosses the membrane as a helical span at residues 357–377 (VTGDAIGAALLGGLGAMMTPV). Residue alanine 378 is a topological domain, periplasmic. The helical transmembrane segment at 379-399 (SASASGFGLLIIGVLLLLVLV) threads the bilayer. Topologically, residues 400-416 (ELRHFRQTPPQVTASDS) are cytoplasmic.

The protein belongs to the major facilitator superfamily. EntS (TC 2.A.1.38) family.

It is found in the cell inner membrane. In terms of biological role, component of an export pathway for enterobactin. This is Enterobactin exporter EntS from Escherichia coli (strain K12 / MC4100 / BW2952).